The following is a 494-amino-acid chain: UDP-N-acetylmuramoyl-L-alanyl-D-glutamate--L-lysine ligase (494 aa).

S30 contacts UDP-N-acetyl-alpha-D-muramoyl-L-alanyl-D-glutamate. Residue 110–116 (GTNGKTS) coordinates ATP. UDP-N-acetyl-alpha-D-muramoyl-L-alanyl-D-glutamate contacts are provided by residues 152-153 (TT), S179, and R187. The residue at position 219 (K219) is an N6-carboxylysine. The short motif at 406-409 (DNPA) is the L-lysine recognition motif element.

The protein belongs to the MurCDEF family. MurE subfamily. In terms of processing, carboxylation is probably crucial for Mg(2+) binding and, consequently, for the gamma-phosphate positioning of ATP.

It is found in the cytoplasm. It carries out the reaction UDP-N-acetyl-alpha-D-muramoyl-L-alanyl-D-glutamate + L-lysine + ATP = UDP-N-acetyl-alpha-D-muramoyl-L-alanyl-gamma-D-glutamyl-L-lysine + ADP + phosphate + H(+). The protein operates within cell wall biogenesis; peptidoglycan biosynthesis. In terms of biological role, catalyzes the addition of L-lysine to the nucleotide precursor UDP-N-acetylmuramoyl-L-alanyl-D-glutamate (UMAG) in the biosynthesis of bacterial cell-wall peptidoglycan. In Staphylococcus aureus (strain MW2), this protein is UDP-N-acetylmuramoyl-L-alanyl-D-glutamate--L-lysine ligase.